The chain runs to 201 residues: Recombination protein RecR (201 aa).

The segment at 60 to 75 adopts a C4-type zinc-finger fold; sequence CKKCFNLTSEDECEIC. The Toprim domain occupies 83–177; the sequence is KLICVVAETK…KVTRIAYGLP (95 aa).

This sequence belongs to the RecR family.

Functionally, may play a role in DNA repair. It seems to be involved in an RecBC-independent recombinational process of DNA repair. It may act with RecF and RecO. The protein is Recombination protein RecR of Prochlorococcus marinus (strain MIT 9215).